Consider the following 277-residue polypeptide: Pantothenate synthetase (277 aa).

26–33 (MGNLHAGH) serves as a coordination point for ATP. The active-site Proton donor is the His33. Gln57 provides a ligand contact to (R)-pantoate. Residue Gln57 participates in beta-alanine binding. Residue 143-146 (GEKD) coordinates ATP. Gln149 contacts (R)-pantoate. Residues Val172 and 180–183 (LSSR) each bind ATP.

This sequence belongs to the pantothenate synthetase family. In terms of assembly, homodimer.

It is found in the cytoplasm. The enzyme catalyses (R)-pantoate + beta-alanine + ATP = (R)-pantothenate + AMP + diphosphate + H(+). Its pathway is cofactor biosynthesis; (R)-pantothenate biosynthesis; (R)-pantothenate from (R)-pantoate and beta-alanine: step 1/1. Its function is as follows. Catalyzes the condensation of pantoate with beta-alanine in an ATP-dependent reaction via a pantoyl-adenylate intermediate. In Nitrosomonas europaea (strain ATCC 19718 / CIP 103999 / KCTC 2705 / NBRC 14298), this protein is Pantothenate synthetase.